Here is a 285-residue protein sequence, read N- to C-terminus: CCR4-NOT transcription complex subunit 7 (285 aa).

5 residues coordinate a divalent metal cation: aspartate 40, glutamate 42, aspartate 161, aspartate 230, and glutamate 278.

It belongs to the CAF1 family. In terms of assembly, component of the CCR4-NOT complex. Mn(2+) is required as a cofactor. The cofactor is Mg(2+). Requires Co(2+) as cofactor.

It localises to the nucleus. The protein localises to the cytoplasm. The enzyme catalyses Exonucleolytic cleavage of poly(A) to 5'-AMP.. In terms of biological role, has 3'-5' poly(A) exoribonuclease activity for synthetic poly(A) RNA substrate. Catalytic component of the CCR4-NOT complex which is one of the major cellular mRNA deadenylases and is linked to various cellular processes including bulk mRNA degradation, miRNA-mediated repression, translational repression during translational initiation and general transcription regulation. During miRNA-mediated repression the complex also seems to act as translational repressor during translational initiation. Additional complex functions may be a consequence of its influence on mRNA expression. This is CCR4-NOT transcription complex subunit 7 (CNOT7) from Gallus gallus (Chicken).